We begin with the raw amino-acid sequence, 38 residues long: Potassium channel toxin alpha-KTx 3.7 (38 aa).

Intrachain disulfides connect Cys8–Cys28, Cys14–Cys33, and Cys18–Cys35.

It belongs to the short scorpion toxin superfamily. Potassium channel inhibitor family. Alpha-KTx 03 subfamily. As to expression, expressed by the venom gland.

It is found in the secreted. Blocks voltage-gated potassium channels Kv1.1/KCNA1 (IC(50)=0.6 nM), Kv1.2/KCNA2 (IC(50)=5.4 nM), Kv1.3/KCNA3 (IC(50)=0.014 nM) potently, and moderately block intermediate conductance calcium-activated potassium channels KCa3.1/KCNN4 (IC(50)=225 nM). Also shows activity on muscle-type nicotinic acetylcholine receptor (nAChR), since it reversibly and dose-dependently inhibits acetylcholine-induced current through mouse muscle-type nAChR heterologously expressed in Xenopus oocytes (IC(50)=1.6 uM). This chain is Potassium channel toxin alpha-KTx 3.7, found in Orthochirus scrobiculosus (Central Asian scorpion).